The primary structure comprises 137 residues: Large-conductance mechanosensitive channel (137 aa).

Residues Met-1 to Val-16 are Cytoplasmic-facing. The helical transmembrane segment at Val-17–Leu-45 threads the bilayer. Residues Gly-46–Asn-74 lie on the Periplasmic side of the membrane. The chain crosses the membrane as a helical span at residues Tyr-75–Ile-94. Residues Ala-95–Gln-137 are Cytoplasmic-facing.

This sequence belongs to the MscL family. As to quaternary structure, homopentamer.

It localises to the cell inner membrane. Its function is as follows. Channel that opens in response to stretch forces in the membrane lipid bilayer. Forms a nonselective ion channel with a conductance of about 4 nanosiemens. May participate in the regulation of osmotic pressure changes within the cell. The protein is Large-conductance mechanosensitive channel of Pectobacterium carotovorum (Erwinia carotovora).